Reading from the N-terminus, the 426-residue chain is Melibiose/raffinose/stachyose-binding protein MelE (426 aa).

The N-terminal stretch at 1 to 18 (MKHTFVLFLSLILLVLPG) is a signal peptide. Residue C19 is the site of N-palmitoyl cysteine attachment. C19 is lipidated: S-diacylglycerol cysteine.

The protein belongs to the bacterial solute-binding protein 1 family. The complex is composed of two ATP-binding proteins (MsmX), two transmembrane proteins (MelC and MelD) and a solute-binding protein (MelE).

Its subcellular location is the cell membrane. Part of the ABC transporter complex MelEDC-MsmX involved in melibiose, raffinose and stachyose import. Binds melibiose, raffinose and stachyose. This Bacillus subtilis (strain 168) protein is Melibiose/raffinose/stachyose-binding protein MelE.